A 141-amino-acid chain; its full sequence is Large ribosomal subunit protein uL14 (141 aa).

It belongs to the universal ribosomal protein uL14 family. As to quaternary structure, part of the 50S ribosomal subunit. Forms a cluster with proteins L3 and L24e, part of which may contact the 16S rRNA in 2 intersubunit bridges.

Binds to 23S rRNA. Forms part of two intersubunit bridges in the 70S ribosome. The polypeptide is Large ribosomal subunit protein uL14 (Pyrococcus horikoshii (strain ATCC 700860 / DSM 12428 / JCM 9974 / NBRC 100139 / OT-3)).